The sequence spans 641 residues: Acetyl-coenzyme A synthetase (641 aa).

Residues 186–189 (RGGK) and Thr-304 contribute to the CoA site. ATP is bound by residues 380 to 382 (GEP), 404 to 409 (DTWWQT), Asp-493, and Arg-508. Ser-516 contacts CoA. Residue Arg-519 coordinates ATP. Mg(2+) is bound by residues Val-530, His-532, and Ile-535. Position 602 is an N6-acetyllysine (Lys-602).

Belongs to the ATP-dependent AMP-binding enzyme family. Mg(2+) is required as a cofactor. In terms of processing, acetylated. Deacetylation by the SIR2-homolog deacetylase activates the enzyme.

The enzyme catalyses acetate + ATP + CoA = acetyl-CoA + AMP + diphosphate. Its function is as follows. Catalyzes the conversion of acetate into acetyl-CoA (AcCoA), an essential intermediate at the junction of anabolic and catabolic pathways. AcsA undergoes a two-step reaction. In the first half reaction, AcsA combines acetate with ATP to form acetyl-adenylate (AcAMP) intermediate. In the second half reaction, it can then transfer the acetyl group from AcAMP to the sulfhydryl group of CoA, forming the product AcCoA. The chain is Acetyl-coenzyme A synthetase from Gamma-proteobacterium EBAC31A08.